The following is a 488-amino-acid chain: Solute carrier family 41 member 3 (488 aa).

2 stretches are compositionally biased toward basic and acidic residues: residues 1–19 and 27–36; these read MEGTEARQRRLEGCGRLKE and DAGRLPKASE. The interval 1–36 is disordered; that stretch reads MEGTEARQRRLEGCGRLKELGPLPSHDAGRLPKASE. 9 consecutive transmembrane segments (helical) span residues 63–83, 147–167, 189–209, 220–240, 251–271, 284–304, 377–397, 406–426, and 450–470; these read LIIGFQVVIPFLLAGVGLSWA, LAVVQVQATVVGLLAAVASLM, VITAFLAALALGILMICIVIG, IATPIAASLGDLITLSILALM, WYLTPLVCVGFLALTPLWLFI, YGWFPIILAMIISSFGGLILS, VLLFLVVPGHLIFFYLICLVE, IFILLYLVAGVVQVVILLYLA, and GLGDLLGTSLLALCFFLDWLL.

It belongs to the SLC41A transporter family.

It is found in the mitochondrion inner membrane. It catalyses the reaction Mg(2+)(in) + 2 Na(+)(out) = Mg(2+)(out) + 2 Na(+)(in). In terms of biological role, na(+)/Mg(2+) ion exchanger that acts as a predominant Mg(2+) efflux system at the mitochondrial inner membrane. This is Solute carrier family 41 member 3 (Slc41a3) from Mus musculus (Mouse).